The following is a 349-amino-acid chain: UDP-N-acetylenolpyruvoylglucosamine reductase (349 aa).

The 174-residue stretch at 24–197 (FGIDATARFA…VAVTFRLPKR (174 aa)) folds into the FAD-binding PCMH-type domain. R173 is an active-site residue. S249 functions as the Proton donor in the catalytic mechanism. The active site involves E345.

It belongs to the MurB family. FAD serves as cofactor.

It is found in the cytoplasm. It catalyses the reaction UDP-N-acetyl-alpha-D-muramate + NADP(+) = UDP-N-acetyl-3-O-(1-carboxyvinyl)-alpha-D-glucosamine + NADPH + H(+). It functions in the pathway cell wall biogenesis; peptidoglycan biosynthesis. Functionally, cell wall formation. This chain is UDP-N-acetylenolpyruvoylglucosamine reductase, found in Burkholderia ambifaria (strain MC40-6).